Here is a 94-residue protein sequence, read N- to C-terminus: ESAT-6-like protein EsxI (94 aa).

The protein belongs to the WXG100 family. ESAT-6 subfamily.

The protein localises to the secreted. This is ESAT-6-like protein EsxI from Mycobacterium tuberculosis (strain CDC 1551 / Oshkosh).